Here is a 373-residue protein sequence, read N- to C-terminus: Deoxyguanosinetriphosphate triphosphohydrolase-like protein 1 (373 aa).

Residues 21–43 form a disordered region; sequence RSSEARRAVPEAPSETRTAYQKD. Residues 76-198 form the HD domain; that stretch reads RLTHTLEVQQ…VDAADALAYT (123 aa).

The protein belongs to the dGTPase family. Type 2 subfamily.

This chain is Deoxyguanosinetriphosphate triphosphohydrolase-like protein 1, found in Deinococcus radiodurans (strain ATCC 13939 / DSM 20539 / JCM 16871 / CCUG 27074 / LMG 4051 / NBRC 15346 / NCIMB 9279 / VKM B-1422 / R1).